Here is a 483-residue protein sequence, read N- to C-terminus: Regulatory protein ViaA (483 aa).

The protein belongs to the ViaA family. Homodimer. Interacts with RavA.

Its subcellular location is the cytoplasm. Its function is as follows. Component of the RavA-ViaA chaperone complex, which may act on the membrane to optimize the function of some of the respiratory chains. ViaA stimulates the ATPase activity of RavA. The chain is Regulatory protein ViaA from Escherichia coli O6:K15:H31 (strain 536 / UPEC).